Reading from the N-terminus, the 599-residue chain is Elongation factor 4 (599 aa).

Positions 2 to 184 (KHIRNFSIIA…RLVRDIPPPE (183 aa)) constitute a tr-type G domain. Residues 14 to 19 (DHGKST) and 131 to 134 (NKID) each bind GTP.

The protein belongs to the TRAFAC class translation factor GTPase superfamily. Classic translation factor GTPase family. LepA subfamily.

The protein resides in the cell inner membrane. It carries out the reaction GTP + H2O = GDP + phosphate + H(+). In terms of biological role, required for accurate and efficient protein synthesis under certain stress conditions. May act as a fidelity factor of the translation reaction, by catalyzing a one-codon backward translocation of tRNAs on improperly translocated ribosomes. Back-translocation proceeds from a post-translocation (POST) complex to a pre-translocation (PRE) complex, thus giving elongation factor G a second chance to translocate the tRNAs correctly. Binds to ribosomes in a GTP-dependent manner. In Pectobacterium carotovorum subsp. carotovorum (strain PC1), this protein is Elongation factor 4.